Consider the following 163-residue polypeptide: MSFNFRIGQGYDVHAFGPGDHLMLGGVRMAHSHGVLAHSDGDVVLHALCDAMLGGLALGDIGVHFPPSDARWKGADSAQFVQHCDQLLRDRGWRVGNADITVICERPKVGPHALAMRERIAGLLAIELDAVSVKATTSEKLGFTGRSEGIAAQAAVLLGKIAA.

A divalent metal cation contacts are provided by D12 and H14. Residues 12–14 and 38–39 contribute to the 4-CDP-2-C-methyl-D-erythritol 2-phosphate site; these read DVH and HS. Position 46 (H46) interacts with a divalent metal cation. 4-CDP-2-C-methyl-D-erythritol 2-phosphate-binding positions include 60-62, 136-139, F143, and R146; these read DIG and TTSE.

It belongs to the IspF family. As to quaternary structure, homotrimer. A divalent metal cation is required as a cofactor.

The catalysed reaction is 4-CDP-2-C-methyl-D-erythritol 2-phosphate = 2-C-methyl-D-erythritol 2,4-cyclic diphosphate + CMP. It participates in isoprenoid biosynthesis; isopentenyl diphosphate biosynthesis via DXP pathway; isopentenyl diphosphate from 1-deoxy-D-xylulose 5-phosphate: step 4/6. In terms of biological role, involved in the biosynthesis of isopentenyl diphosphate (IPP) and dimethylallyl diphosphate (DMAPP), two major building blocks of isoprenoid compounds. Catalyzes the conversion of 4-diphosphocytidyl-2-C-methyl-D-erythritol 2-phosphate (CDP-ME2P) to 2-C-methyl-D-erythritol 2,4-cyclodiphosphate (ME-CPP) with a corresponding release of cytidine 5-monophosphate (CMP). The sequence is that of 2-C-methyl-D-erythritol 2,4-cyclodiphosphate synthase from Xanthomonas campestris pv. campestris (strain 8004).